A 615-amino-acid chain; its full sequence is DNA mismatch repair protein MutL (615 aa).

Positions H362 to Y397 are disordered. Residues A373 to P391 show a composition bias toward low complexity.

The protein belongs to the DNA mismatch repair MutL/HexB family.

In terms of biological role, this protein is involved in the repair of mismatches in DNA. It is required for dam-dependent methyl-directed DNA mismatch repair. May act as a 'molecular matchmaker', a protein that promotes the formation of a stable complex between two or more DNA-binding proteins in an ATP-dependent manner without itself being part of a final effector complex. The protein is DNA mismatch repair protein MutL of Escherichia coli O45:K1 (strain S88 / ExPEC).